A 314-amino-acid chain; its full sequence is Homeobox-leucine zipper protein HAT7 (314 aa).

The interval 77 to 109 (HHHLTQKSPTTTNNMNDQDQVGEEDNLSDDGSH) is disordered. The segment covering 82-95 (QKSPTTTNNMNDQD) has biased composition (polar residues). The segment at residues 112–171 (LGEKKKRLNLEQVRALEKSFELGNKLEPERKMQLAKALGLQPRQIAIWFQNRRARWKTKQ) is a DNA-binding region (homeobox). The segment at 172–207 (LERDYDSLKKQFDVLKSDNDSLLAHNKKLHAELVAL) is leucine-zipper.

It belongs to the HD-ZIP homeobox family. Class I subfamily. In terms of tissue distribution, expressed predominantly in flowers, and in the cortex of the root and the stem.

It localises to the nucleus. Functionally, probable transcription factor. The protein is Homeobox-leucine zipper protein HAT7 (HAT7) of Arabidopsis thaliana (Mouse-ear cress).